A 320-amino-acid polypeptide reads, in one-letter code: Olfactory receptor 51E2 (320 aa).

Over 1-24 (MSSCNFTHATFMLIGIPGLEEAHF) the chain is Extracellular. Asn-5 carries an N-linked (GlcNAc...) asparagine glycan. The chain crosses the membrane as a helical span at residues 25–45 (WFGFPLLSMYAVALFGNCIVV). Residues 46 to 53 (FIVRTERS) are Cytoplasmic-facing. The helical transmembrane segment at 54 to 74 (LHAPMYLFLCMLAAIDLALST) threads the bilayer. At 75 to 98 (STMPKILALFWFDSREITFDACLA) the chain is on the extracellular side. Residues Cys-96 and Cys-178 are joined by a disulfide bond. Residues 99-119 (QMFFIHALSAIESTILLAMAF) traverse the membrane as a helical segment. Over 120 to 138 (DRYVAICHPLRHAAVLNNT) the chain is Cytoplasmic. A helical transmembrane segment spans residues 139–159 (VTVQIGMVALVRGSLFFFPLP). At 160–195 (LLIKRLAFCHSNVLSHSYCVHQDVMKLAYTDTLPNV) the chain is on the extracellular side. The helical transmembrane segment at 196–216 (VYGLTAILLVMGVDVMFISLS) threads the bilayer. Residues 217-236 (YFLIIRAVLQLPSKSERAKA) are Cytoplasmic-facing. Residues 237–257 (FGTCVSHIGVVLAFYVPLIGL) traverse the membrane as a helical segment. Over 258-272 (SVVHRFGNSLDPIVH) the chain is Extracellular. The chain crosses the membrane as a helical span at residues 273-293 (VLMGDVYLLLPPVINPIIYGA). Over 294–320 (KTKQIRTRVLAMFKISCDKDIEAGGNT) the chain is Cytoplasmic.

Belongs to the G-protein coupled receptor 1 family. Expressed in brain and liver. Expressed only in some areas of the brain and in the olfactory epithelium.

Its subcellular location is the cell membrane. It localises to the early endosome membrane. Its function is as follows. Olfactory receptor. The activity of this receptor is probably mediated by G-proteins which induce elevation of intracellular Ca(2+), cAMP and activation of phosphorylation of the protein kinases PKA and MAPK3/MAPK1. Activation of OR51E2 may affect melanocyte proliferation, differentiation, and melanogenesis and may increase proliferation and migration of primary retinal pigment epithelial (RPE) cells. Activated by the short chain fatty acids (SCFA), acetate and propionate. In response to SCFA, may positively regulate renin secretion and increase blood pressure. May also be activated by steroid hormones and regulate cell proliferation. Activated by L-lactate in glomus cells. This chain is Olfactory receptor 51E2 (Or51e2), found in Rattus norvegicus (Rat).